The sequence spans 91 residues: Pre-early 3 receptor internalization and degradation alpha protein (91 aa).

The Cytoplasmic portion of the chain corresponds to 1–4 (MIPR). Residues 1–22 (MIPRVLILLTLVALFCACSTLA) constitute a propeptide, signal peptide. The helical transmembrane segment at 5-25 (VLILLTLVALFCACSTLAAVA) threads the bilayer. Over 26 to 34 (HIEVDCIPP) the chain is Lumenal. Residues 35-60 (FTVYLLYGFVTLILICSLVTVVIAFI) form a helical membrane-spanning segment. At 61 to 91 (QFIDWVCVRIAYLRHHPQYRDRTIADLLRIL) the chain is on the cytoplasmic side.

It belongs to the adenoviridae E3-RID-alpha family. As to quaternary structure, homodimer with only one chain cleaved by signal peptidase. Interacts with E3 RID-beta and E3 CR1-alpha. The signal peptide is only cleaved partially by host signal peptidase. This results in two forms of the protein, one uncleaved with two transmembrane regions, and one cleaved with one transmembrane region.

Its subcellular location is the host membrane. It localises to the host endoplasmic reticulum. Prevents infected cell apoptosis induced by the host immune system. Acts by down-regulating a number of cell surface receptors in the tumor necrosis factor (TNF) receptor superfamily, namely FAS, TNFRSF10A/TRAIL receptor 1, and TNFRSF10B/TRAIL receptor 2. Down-regulation of these death receptors protects adenovirus-infected cells from apoptosis induced by the death receptor ligands Fas ligand and TRAIL. RID complex also down-regulates certain tyrosine kinase cell surface receptors, especially the epidermal growth factor receptor (EGFR). RID-mediated Fas and EGFR down-regulation occurs via endocytosis of the receptors into endosomes followed by transport to and degradation within lysosomes. The polypeptide is Pre-early 3 receptor internalization and degradation alpha protein (Homo sapiens (Human)).